We begin with the raw amino-acid sequence, 149 residues long: Large ribosomal subunit protein uL15 (149 aa).

2 stretches are compositionally biased toward basic residues: residues 1 to 14 (MPTHLSKTRKHRGH) and 21 to 30 (RVGKHRKHPG). The tract at residues 1–42 (MPTHLSKTRKHRGHVSAGHGRVGKHRKHPGGRGLAGGQHHHR) is disordered.

It belongs to the universal ribosomal protein uL15 family.

The sequence is that of Large ribosomal subunit protein uL15 from Blumeria hordei (Barley powdery mildew).